Here is a 122-residue protein sequence, read N- to C-terminus: MAEMTVELVAVERRLWSGSATLVSAQTTEGEIGVMPGHEPVLGQLVEAGVVAITTADGERIVAAVHGGFLSVTAKTVTILAESADLAEDIDVEAAKAVLAESGDDLEAIAVAKGRIRAVERA.

This sequence belongs to the ATPase epsilon chain family. In terms of assembly, F-type ATPases have 2 components, CF(1) - the catalytic core - and CF(0) - the membrane proton channel. CF(1) has five subunits: alpha(3), beta(3), gamma(1), delta(1), epsilon(1). CF(0) has three main subunits: a, b and c.

It localises to the cell membrane. In terms of biological role, produces ATP from ADP in the presence of a proton gradient across the membrane. The chain is ATP synthase epsilon chain from Rhodococcus jostii (strain RHA1).